Reading from the N-terminus, the 511-residue chain is Exodeoxyribonuclease 7 large subunit (511 aa).

This sequence belongs to the XseA family. As to quaternary structure, heterooligomer composed of large and small subunits.

It is found in the cytoplasm. It carries out the reaction Exonucleolytic cleavage in either 5'- to 3'- or 3'- to 5'-direction to yield nucleoside 5'-phosphates.. Functionally, bidirectionally degrades single-stranded DNA into large acid-insoluble oligonucleotides, which are then degraded further into small acid-soluble oligonucleotides. The chain is Exodeoxyribonuclease 7 large subunit from Brucella abortus (strain S19).